The primary structure comprises 483 residues: BTB/POZ domain and ankyrin repeat-containing protein NBCL (483 aa).

One can recognise a BTB domain in the interval 25–109; the sequence is SDVTFSVEGR…LYSGQVSIVP (85 aa). Residues 115–129 form a C2HC NPR-type zinc finger; it reads RPNCGERACWHTHCT. The Zn(2+) site is built by C118, C123, H125, and C128. ANK repeat units follow at residues 254–283, 284–313, 318–347, and 351–385; these read QKIR…LNLD, EALA…DVNY, SGKT…DPNV, and DGVT…KLRL. The segment at 401–437 is disordered; the sequence is EGNANANSSNNNNAPCSAATPIYPPMNEDHNSSSSNA. Residues 403–419 show a composition bias toward low complexity; the sequence is NANANSSNNNNAPCSAA.

It belongs to the plant 'ANKYRIN-BTB/POZ' family. 'NOOT-BOP-COCH-like' (NBCL) subfamily. Homodimer. Interacts with APP1 around the plasma membrane and in the nucleus; this interaction disturbs APP1-mediated regulation of the nuclear transcription factor Y subunit (NF-YA1). Mainly expressed in root nodules, to a lesser extent in shoot apical meristems (SAM) and root meristems (RM), and barely in leaves, non-nodulating roots and root apical meristems (RAM).

It localises to the nucleus. Its subcellular location is the cytoplasm. The protein localises to the cell membrane. It participates in protein modification; protein ubiquitination. In terms of biological role, may act as a substrate-specific adapter of an E3 ubiquitin-protein ligase complex (CUL3-RBX1-BTB) which mediates the ubiquitination and subsequent proteasomal degradation of target proteins. Transcriptional co-regulator involved in the promotion of leaf and floral meristem fate and determinacy. Required for the abscission of senescent organs, probably by regulating the cell wall disorganization in abscission zones (AZs, e.g. pulvini at the base of leaves). Involved in the coordination of the symbiotic nodule developmental program; promotes the formation of root nodules by interacting directly with APP1 to modulate the expression of the nuclear transcription factor Y subunit (NF-YA1), a key nodulin. Necessary for the robust maintenance of nodule identity throughout the nodule developmental program. This Lotus japonicus (Lotus corniculatus var. japonicus) protein is BTB/POZ domain and ankyrin repeat-containing protein NBCL.